Consider the following 583-residue polypeptide: uncharacterized protein (583 aa).

Residues 1–38 show a composition bias toward polar residues; it reads MGQGESIPSRQIQRDASMQAVSSESENINDSDRQNSGF. Disordered regions lie at residues 1–39, 53–124, 156–197, and 362–452; these read MGQGESIPSRQIQRDASMQAVSSESENINDSDRQNSGFS, GLRR…AIPQ, TQNN…TAIG, and NSGS…QTDH. Residues 70–80 are compositionally biased toward basic and acidic residues; that stretch reads GNRDRTTERSA. Residues 88 to 102 show a composition bias toward low complexity; sequence SLLNRNSPSLRSLSP. Composition is skewed to polar residues over residues 156 to 165, 172 to 191, 384 to 408, and 420 to 452; these read TQNNQSTLAS, VSSSGGQEMQDHGSVNNLES, LISSLVNSQNQTTSVSDNTGPNENV, and ASTATDVNGISDNNGSSTQQAPETRNNNSQTDH. Residues 525–568 form an RING-type zinc finger; sequence CLVCLSNFELNDECRRLKQCNHFFHRECIDQWLTSSQNSCPLCR. S580 is modified (phosphoserine).

Its subcellular location is the membrane. This is an uncharacterized protein from Schizosaccharomyces pombe (strain 972 / ATCC 24843) (Fission yeast).